Consider the following 294-residue polypeptide: MAESPLEIHVIADSTGETAVRLARAARSQFEGVHWHIVRHPMIGTVPEMVSALEAVSEAHEAGQWVCVVHTLVLPDMRRMVSDACEEMGIRELDLMGPMLEAMEEASGLDADAVPRRPVGVEADYFTRISAMEFAVRNDDGAIPDRLTEADICLVGVSRSGKTPLSIYLGYLGYKTVNVPLVPGIAPPTELAAVDRWRIVGLTIDAQRLLEIRGRRVRGLGGFGNEDGYADLAAIYEELDEVGKIQRRLGCPIIDTTGLALEESATKVIDVVDQRAKTAGTRLRKPAGSYRMRP.

156 to 163 serves as a coordination point for ADP; sequence GVSRSGKT.

Belongs to the pyruvate, phosphate/water dikinase regulatory protein family. PDRP subfamily.

It carries out the reaction N(tele)-phospho-L-histidyl/L-threonyl-[pyruvate, phosphate dikinase] + ADP = N(tele)-phospho-L-histidyl/O-phospho-L-threonyl-[pyruvate, phosphate dikinase] + AMP + H(+). The catalysed reaction is N(tele)-phospho-L-histidyl/O-phospho-L-threonyl-[pyruvate, phosphate dikinase] + phosphate + H(+) = N(tele)-phospho-L-histidyl/L-threonyl-[pyruvate, phosphate dikinase] + diphosphate. In terms of biological role, bifunctional serine/threonine kinase and phosphorylase involved in the regulation of the pyruvate, phosphate dikinase (PPDK) by catalyzing its phosphorylation/dephosphorylation. This is Putative pyruvate, phosphate dikinase regulatory protein from Cutibacterium acnes (strain DSM 16379 / KPA171202) (Propionibacterium acnes).